A 301-amino-acid chain; its full sequence is GTPase Era (301 aa).

Residues 4–173 (KAGFVALIGK…LECISKHLIP (170 aa)) form the Era-type G domain. The tract at residues 12–19 (GKPNAGKS) is G1. 12–19 (GKPNAGKS) is a GTP binding site. The segment at 38-42 (NATRK) is G2. A G3 region spans residues 64-67 (DTPG). Residues 64–68 (DTPGL) and 122–125 (SKID) each bind GTP. The segment at 122 to 125 (SKID) is G4. A G5 region spans residues 152-154 (LSA). In terms of domain architecture, KH type-2 spans 204 to 280 (LSDEIPYESD…FLNLQVIAQK (77 aa)).

It belongs to the TRAFAC class TrmE-Era-EngA-EngB-Septin-like GTPase superfamily. Era GTPase family. In terms of assembly, monomer.

It is found in the cytoplasm. The protein resides in the cell inner membrane. In terms of biological role, an essential GTPase that binds both GDP and GTP, with rapid nucleotide exchange. Plays a role in 16S rRNA processing and 30S ribosomal subunit biogenesis and possibly also in cell cycle regulation and energy metabolism. The protein is GTPase Era of Helicobacter pylori (strain HPAG1).